An 82-amino-acid polypeptide reads, in one-letter code: Defensin-like protein 208 (82 aa).

Positions 1–29 (MAKNLNTVSFTVLLLVLLMASTGILETEA) are cleaved as a signal peptide. Intrachain disulfides connect cysteine 38–cysteine 63, cysteine 50–cysteine 76, and cysteine 54–cysteine 78.

The protein belongs to the DEFL family.

It is found in the secreted. In Arabidopsis thaliana (Mouse-ear cress), this protein is Defensin-like protein 208.